Here is a 178-residue protein sequence, read N- to C-terminus: Actin-related protein 2/3 complex subunit 3-B (178 aa).

It belongs to the ARPC3 family. Component of the Arp2/3 complex composed of actr2/arp2, actr3/arp3, arpc1 (arpc1a or arpc1b), arpc2, arpc3, arpc4 and arpc5.

Its subcellular location is the cytoplasm. It is found in the cytoskeleton. The protein localises to the cell projection. It localises to the nucleus. Component of the Arp2/3 complex, a multiprotein complex that mediates actin polymerization upon stimulation by nucleation-promoting factor (NPF). The Arp2/3 complex mediates the formation of branched actin networks in the cytoplasm, providing the force for cell motility. In addition to its role in the cytoplasmic cytoskeleton, the Arp2/3 complex also promotes actin polymerization in the nucleus, thereby regulating gene transcription and repair of damaged DNA. The Arp2/3 complex promotes homologous recombination (HR) repair in response to DNA damage by promoting nuclear actin polymerization, leading to drive motility of double-strand breaks (DSBs). In Xenopus laevis (African clawed frog), this protein is Actin-related protein 2/3 complex subunit 3-B (arpc3-b).